A 379-amino-acid polypeptide reads, in one-letter code: F420-dependent formate dehydrogenase subunit beta (379 aa).

2 4Fe-4S ferredoxin-type domains span residues 271 to 301 (EKWK…CSLE) and 321 to 351 (IRLS…YIFH). Cys280, Cys283, Cys286, Cys290, Cys330, Cys333, Cys336, and Cys340 together coordinate [4Fe-4S] cluster.

The protein belongs to the FrhB family. Dimer of an alpha (FdhA) and a beta (FdhB) subunit. The cofactor is [4Fe-4S] cluster. Requires FAD as cofactor. Zn(2+) is required as a cofactor.

The enzyme catalyses oxidized coenzyme F420-(gamma-L-Glu)(n) + formate + 2 H(+) = reduced coenzyme F420-(gamma-L-Glu)(n) + CO2. Functionally, catalyzes the oxidation of formate to carbon dioxide, with coenzyme F420 as the electron acceptor. The sequence is that of F420-dependent formate dehydrogenase subunit beta (fdhB) from Methanocaldococcus jannaschii (strain ATCC 43067 / DSM 2661 / JAL-1 / JCM 10045 / NBRC 100440) (Methanococcus jannaschii).